The chain runs to 98 residues: Large ribosomal subunit protein uL23 (98 aa).

It belongs to the universal ribosomal protein uL23 family. In terms of assembly, part of the 50S ribosomal subunit. Contacts protein L29, and trigger factor when it is bound to the ribosome.

One of the early assembly proteins it binds 23S rRNA. One of the proteins that surrounds the polypeptide exit tunnel on the outside of the ribosome. Forms the main docking site for trigger factor binding to the ribosome. The polypeptide is Large ribosomal subunit protein uL23 (Streptococcus sanguinis (strain SK36)).